A 164-amino-acid chain; its full sequence is Peptidyl-prolyl cis-trans isomerase (164 aa).

The region spanning 7–163 (FFDLQANGEN…KKITIADCGQ (157 aa)) is the PPIase cyclophilin-type domain.

This sequence belongs to the cyclophilin-type PPIase family. PPIase A subfamily.

The protein resides in the cytoplasm. The enzyme catalyses [protein]-peptidylproline (omega=180) = [protein]-peptidylproline (omega=0). Its activity is regulated as follows. Binds cyclosporin A (CsA). CsA mediates some of its effects via an inhibitory action on PPIase. Functionally, PPIases accelerate the folding of proteins. It catalyzes the cis-trans isomerization of proline imidic peptide bonds in oligopeptides. The polypeptide is Peptidyl-prolyl cis-trans isomerase (Hemicentrotus pulcherrimus (Sea urchin)).